We begin with the raw amino-acid sequence, 242 residues long: Ribosomal RNA small subunit methyltransferase G (242 aa).

Residues Gly78, Leu83, 130-131 (AE), and Arg151 each bind S-adenosyl-L-methionine.

Belongs to the methyltransferase superfamily. RNA methyltransferase RsmG family.

Its subcellular location is the cytoplasm. Specifically methylates the N7 position of guanine in position 518 of 16S rRNA. This is Ribosomal RNA small subunit methyltransferase G from Salinispora tropica (strain ATCC BAA-916 / DSM 44818 / JCM 13857 / NBRC 105044 / CNB-440).